A 510-amino-acid polypeptide reads, in one-letter code: Glycerol kinase (510 aa).

Threonine 13 lines the ADP pocket. Residues threonine 13 and threonine 14 each coordinate ATP. Sn-glycerol 3-phosphate is bound at residue threonine 13. Arginine 17 serves as a coordination point for ADP. Arginine 83, glutamate 84, tyrosine 135, and aspartate 255 together coordinate sn-glycerol 3-phosphate. 5 residues coordinate glycerol: arginine 83, glutamate 84, tyrosine 135, aspartate 255, and glutamine 256. Positions 277, 321, 421, and 425 each coordinate ADP. Positions 277, 321, and 421 each coordinate ATP.

The protein belongs to the FGGY kinase family.

The catalysed reaction is glycerol + ATP = sn-glycerol 3-phosphate + ADP + H(+). Its pathway is polyol metabolism; glycerol degradation via glycerol kinase pathway; sn-glycerol 3-phosphate from glycerol: step 1/1. In terms of biological role, key enzyme in the regulation of glycerol uptake and metabolism. Catalyzes the phosphorylation of glycerol to yield sn-glycerol 3-phosphate. This Haloquadratum walsbyi (strain DSM 16790 / HBSQ001) protein is Glycerol kinase.